Consider the following 379-residue polypeptide: Cytochrome b (379 aa).

The next 4 membrane-spanning stretches (helical) occupy residues 34 to 54 (FGSL…LLAM), 78 to 99 (WLIR…YFHI), 114 to 134 (WNTG…GYVL), and 179 to 199 (FFAL…IHLT). Residues His-84 and His-98 each coordinate heme b. Residues His-183 and His-197 each coordinate heme b. Residue His-202 participates in a ubiquinone binding. 4 consecutive transmembrane segments (helical) span residues 227–247 (LKDI…TFFS), 289–309 (LGGV…PLLH), 321–341 (FSQV…WVGS), and 348–368 (FIAI…VLFP).

The protein belongs to the cytochrome b family. In terms of assembly, the cytochrome bc1 complex contains 11 subunits: 3 respiratory subunits (MT-CYB, CYC1 and UQCRFS1), 2 core proteins (UQCRC1 and UQCRC2) and 6 low-molecular weight proteins (UQCRH/QCR6, UQCRB/QCR7, UQCRQ/QCR8, UQCR10/QCR9, UQCR11/QCR10 and a cleavage product of UQCRFS1). This cytochrome bc1 complex then forms a dimer. Heme b serves as cofactor.

The protein resides in the mitochondrion inner membrane. Component of the ubiquinol-cytochrome c reductase complex (complex III or cytochrome b-c1 complex) that is part of the mitochondrial respiratory chain. The b-c1 complex mediates electron transfer from ubiquinol to cytochrome c. Contributes to the generation of a proton gradient across the mitochondrial membrane that is then used for ATP synthesis. This is Cytochrome b (MT-CYB) from Apteryx australis (Southern brown kiwi).